Reading from the N-terminus, the 329-residue chain is Phosphate acyltransferase (329 aa).

Belongs to the PlsX family. In terms of assembly, homodimer. Probably interacts with PlsY.

Its subcellular location is the cytoplasm. It carries out the reaction a fatty acyl-[ACP] + phosphate = an acyl phosphate + holo-[ACP]. Its pathway is lipid metabolism; phospholipid metabolism. In terms of biological role, catalyzes the reversible formation of acyl-phosphate (acyl-PO(4)) from acyl-[acyl-carrier-protein] (acyl-ACP). This enzyme utilizes acyl-ACP as fatty acyl donor, but not acyl-CoA. This is Phosphate acyltransferase from Sulfurovum sp. (strain NBC37-1).